Reading from the N-terminus, the 283-residue chain is Probable endonuclease 4 (283 aa).

Zn(2+) contacts are provided by histidine 67, histidine 107, glutamate 144, aspartate 178, histidine 181, histidine 215, aspartate 228, histidine 230, and glutamate 260.

This sequence belongs to the AP endonuclease 2 family. The cofactor is Zn(2+).

The enzyme catalyses Endonucleolytic cleavage to 5'-phosphooligonucleotide end-products.. Its function is as follows. Endonuclease IV plays a role in DNA repair. It cleaves phosphodiester bonds at apurinic or apyrimidinic (AP) sites, generating a 3'-hydroxyl group and a 5'-terminal sugar phosphate. The sequence is that of Probable endonuclease 4 from Geobacter sp. (strain M21).